Here is a 524-residue protein sequence, read N- to C-terminus: Excitatory amino acid transporter 3 (524 aa).

Topologically, residues 1–18 are cytoplasmic; it reads MGKPARKGCDSKRFLKNN. Residues 19–38 form a helical membrane-spanning segment; the sequence is WLLLSTVVAVVLGIVIGVLV. The Extracellular portion of the chain corresponds to 39–61; the sequence is REYSNLSTLDKFYFAFPGEILMR. The N-linked (GlcNAc...) asparagine glycan is linked to N43. A helical transmembrane segment spans residues 62–82; that stretch reads MLKLVILPLIVSSMITGVAAL. Topologically, residues 83 to 93 are cytoplasmic; it reads DSNVSGKIGLR. A helical membrane pass occupies residues 94–114; sequence AVLYYFCTTIIAVILGIVLVV. The Na(+) site is built by Y98, T101, and T102. Residues 115–205 lie on the Extracellular side of the membrane; that stretch reads SIKPGVTQKV…RTKEYRVVGL (91 aa). 2 N-linked (GlcNAc...) asparagine glycosylation sites follow: N178 and N195. A helical transmembrane segment spans residues 206 to 229; that stretch reads YSDGINVLGLIVFCLVFGLVIGKM. Topologically, residues 230-238 are cytoplasmic; sequence GEKGQILVD. Residues 239 to 266 form a helical membrane-spanning segment; it reads FFNALSDATMKIVQIIMCYMPLGILFLI. Residues 267 to 286 lie on the Extracellular side of the membrane; that stretch reads AGKIIEVEDWEIFRKLGLYM. A helical transmembrane segment spans residues 287 to 308; it reads VTVLSGLAIHSIVILPLIYFIV. Topologically, residues 309 to 313 are cytoplasmic; it reads VRKNP. The segment at residues 314–344 is an intramembrane region (discontinuously helical); that stretch reads FRFAMGMTQALLTALMISSSSATLPVTFRCA. Residues S331 and S333 each contribute to the L-aspartate site. At 345–353 the chain is on the cytoplasmic side; that stretch reads EEKNRVDKR. The chain crosses the membrane as a helical span at residues 354-380; it reads ITRFVLPVGATINMDGTALYEAVAAVF. Na(+) is bound by residues G362, T364, N366, and D368. T370 provides a ligand contact to L-aspartate. Over 381–393 the chain is Extracellular; that stretch reads IAQLNDMDLSIGQ. The discontinuously helical intramembrane region spans 394-427; sequence IITISVTATAASIGAAGVPQAGLVTMVIVLSAVG. S405, I406, and A408 together coordinate Na(+). V411 contacts L-aspartate. The Extracellular segment spans residues 428–440; that stretch reads LPAEDVTLIIAVD. A helical membrane pass occupies residues 441-462; that stretch reads WLLDRFRTVVNVLGDAFGTGIV. R447, T448, and N451 together coordinate L-aspartate. N451 and D455 together coordinate Na(+). At 463–524 the chain is on the cytoplasmic side; sequence EKLSKKELEQ…TISFTQTSQF (62 aa). 2 positions are modified to phosphoserine: S517 and S522.

The protein belongs to the dicarboxylate/amino acid:cation symporter (DAACS) (TC 2.A.23) family. SLC1A1 subfamily. Homotrimer. Interacts with ARL6IP5. Interacts with RTN2 (via N-terminus); the interaction promotes cell surface expression of SLC1A1. Interacts with SORCS2; this interaction is important for normal expression at the cell membrane. In terms of tissue distribution, brain, but also small intestine, kidney, liver and heart.

It localises to the cell membrane. It is found in the apical cell membrane. The protein localises to the synapse. The protein resides in the synaptosome. Its subcellular location is the early endosome membrane. It localises to the late endosome membrane. It is found in the recycling endosome membrane. The enzyme catalyses K(+)(in) + L-glutamate(out) + 3 Na(+)(out) + H(+)(out) = K(+)(out) + L-glutamate(in) + 3 Na(+)(in) + H(+)(in). It catalyses the reaction K(+)(in) + L-aspartate(out) + 3 Na(+)(out) + H(+)(out) = K(+)(out) + L-aspartate(in) + 3 Na(+)(in) + H(+)(in). The catalysed reaction is D-aspartate(out) + K(+)(in) + 3 Na(+)(out) + H(+)(out) = D-aspartate(in) + K(+)(out) + 3 Na(+)(in) + H(+)(in). It carries out the reaction K(+)(in) + L-cysteine(out) + 3 Na(+)(out) + H(+)(out) = K(+)(out) + L-cysteine(in) + 3 Na(+)(in) + H(+)(in). Functionally, sodium-dependent, high-affinity amino acid transporter that mediates the uptake of L-glutamate and also L-aspartate and D-aspartate. Can also transport L-cysteine. Functions as a symporter that transports one amino acid molecule together with two or three Na(+) ions and one proton, in parallel with the counter-transport of one K(+) ion. Mediates Cl(-) flux that is not coupled to amino acid transport; this avoids the accumulation of negative charges due to aspartate and Na(+) symport. Plays an important role in L-glutamate and L-aspartate reabsorption in renal tubuli. Plays a redundant role in the rapid removal of released glutamate from the synaptic cleft, which is essential for terminating the postsynaptic action of glutamate. Contributes to glutathione biosynthesis and protection against oxidative stress via its role in L-glutamate and L-cysteine transport. Negatively regulated by ARL6IP5. The sequence is that of Excitatory amino acid transporter 3 (SLC1A1) from Oryctolagus cuniculus (Rabbit).